The following is a 106-amino-acid chain: Putative double-stranded DNA mimic protein VP1949 (106 aa).

It belongs to the putative dsDNA mimic protein family.

In terms of biological role, may act as a double-stranded DNA (dsDNA) mimic. Probably regulates the activity of a dsDNA-binding protein. This Vibrio parahaemolyticus serotype O3:K6 (strain RIMD 2210633) protein is Putative double-stranded DNA mimic protein VP1949.